We begin with the raw amino-acid sequence, 678 residues long: Glycine--tRNA ligase beta subunit (678 aa).

Belongs to the class-II aminoacyl-tRNA synthetase family. In terms of assembly, tetramer of two alpha and two beta subunits.

The protein localises to the cytoplasm. It catalyses the reaction tRNA(Gly) + glycine + ATP = glycyl-tRNA(Gly) + AMP + diphosphate. In Streptococcus pneumoniae (strain ATCC BAA-255 / R6), this protein is Glycine--tRNA ligase beta subunit.